We begin with the raw amino-acid sequence, 219 residues long: UPF0502 protein Ppro_2903 (219 aa).

It belongs to the UPF0502 family.

The sequence is that of UPF0502 protein Ppro_2903 from Pelobacter propionicus (strain DSM 2379 / NBRC 103807 / OttBd1).